A 280-amino-acid polypeptide reads, in one-letter code: MNMRIIEAVDIRYTYPDGTEALRGINFHAERGEVVALLGPNGAGKSTLFLHFNGILQPTSGKIMIDGEELDYSKSGLIKARQKVGIVFQNPDDQLFAPRVDEDVAFGPLNMGLSEDEVEERVRDALQKVGMLGYESKPPHHFSGGEKKRVAIAGIIAMKPDIMVLDEPTSGLDPRGASQILRLLHNLNEEGMTIIISTHDVDLAPLYSDRIYIISDGEIISTGAPSEVFSDIDTIRGANLRLPRIAHLVEILQKEDDLPFEEPYPLTIGEARRKLRNQLR.

An ABC transporter domain is found at Ile-6–Arg-241. Residue Gly-39–Ser-46 coordinates ATP.

Belongs to the ABC transporter superfamily.

It is found in the cell membrane. In terms of biological role, probably part of an ABC transporter complex. Responsible for energy coupling to the transport system. The polypeptide is Putative ABC transporter ATP-binding protein MTH_133 (Methanothermobacter thermautotrophicus (strain ATCC 29096 / DSM 1053 / JCM 10044 / NBRC 100330 / Delta H) (Methanobacterium thermoautotrophicum)).